A 130-amino-acid polypeptide reads, in one-letter code: Iron-sulfur cluster insertion protein ErpA (130 aa).

Cysteine 58, cysteine 122, and cysteine 124 together coordinate iron-sulfur cluster.

It belongs to the HesB/IscA family. Homodimer. The cofactor is iron-sulfur cluster.

Functionally, required for insertion of 4Fe-4S clusters for at least IspG. This is Iron-sulfur cluster insertion protein ErpA from Stenotrophomonas maltophilia (strain K279a).